Consider the following 156-residue polypeptide: ATP synthase subunit b (156 aa).

The helical transmembrane segment at 11–31 (LIAFALFVWFCMKFVWPPIIN) threads the bilayer.

Belongs to the ATPase B chain family. As to quaternary structure, F-type ATPases have 2 components, F(1) - the catalytic core - and F(0) - the membrane proton channel. F(1) has five subunits: alpha(3), beta(3), gamma(1), delta(1), epsilon(1). F(0) has three main subunits: a(1), b(2) and c(10-14). The alpha and beta chains form an alternating ring which encloses part of the gamma chain. F(1) is attached to F(0) by a central stalk formed by the gamma and epsilon chains, while a peripheral stalk is formed by the delta and b chains.

The protein localises to the cell inner membrane. F(1)F(0) ATP synthase produces ATP from ADP in the presence of a proton or sodium gradient. F-type ATPases consist of two structural domains, F(1) containing the extramembraneous catalytic core and F(0) containing the membrane proton channel, linked together by a central stalk and a peripheral stalk. During catalysis, ATP synthesis in the catalytic domain of F(1) is coupled via a rotary mechanism of the central stalk subunits to proton translocation. In terms of biological role, component of the F(0) channel, it forms part of the peripheral stalk, linking F(1) to F(0). In Haemophilus influenzae (strain 86-028NP), this protein is ATP synthase subunit b.